The following is a 284-amino-acid chain: Origin of replication complex subunit 6 (284 aa).

This sequence belongs to the ORC6 family. As to quaternary structure, component of the origin recognition complex (ORC) composed of at least ORC1 (ORC1A or ORC1B), ORC2, ORC3, ORC4, ORC5 and ORC6. ORC is regulated in a cell-cycle and development dependent manner. It is sequentially assembled at the exit from anaphase of mitosis and disassembled as cells enter S phase. Interacts directly with ORC2, ORC3, ORC4 and ORC5. As to expression, follow a cell-cycle regulation with a peak at the G1/S-phase. Mostly expressed in siliques, flowers, flower buds and mature leaves, and, to a lower exent, in roots, leaves and stems.

The protein localises to the nucleus. Functionally, component of the origin recognition complex (ORC) that binds origins of replication. DNA-binding is ATP-dependent. The specific DNA sequences that define origins of replication have not been identified yet. ORC is required to assemble the pre-replication complex necessary to initiate DNA replication. In Arabidopsis thaliana (Mouse-ear cress), this protein is Origin of replication complex subunit 6.